Here is a 129-residue protein sequence, read N- to C-terminus: Small ribosomal subunit protein uS11 (129 aa).

It belongs to the universal ribosomal protein uS11 family. Part of the 30S ribosomal subunit. Interacts with proteins S7 and S18. Binds to IF-3.

Functionally, located on the platform of the 30S subunit, it bridges several disparate RNA helices of the 16S rRNA. Forms part of the Shine-Dalgarno cleft in the 70S ribosome. The polypeptide is Small ribosomal subunit protein uS11 (Pelotomaculum thermopropionicum (strain DSM 13744 / JCM 10971 / SI)).